The primary structure comprises 931 residues: Probable UDP-N-acetylglucosamine--peptide N-acetylglucosaminyltransferase SPINDLY (931 aa).

Basic and acidic residues predominate over residues 1 to 15; it reads MAWTEKDVENGKESE. The disordered stretch occupies residues 1–38; sequence MAWTEKDVENGKESESLGNNGFLKGGQSSSGSKGSPGR. Low complexity predominate over residues 25-37; it reads GGQSSSGSKGSPG. TPR repeat units follow at residues 48 to 81, 82 to 115, 116 to 149, 157 to 190, 191 to 224, 225 to 258, 266 to 299, 300 to 333, 334 to 367, 369 to 401, and 402 to 435; these read DKDA…DSKS, IESL…DPQN, ACAL…DPSY, AIVL…DSHY, APAY…RPMY, AEAY…SPNF, AIAL…NWHY, ADAM…NPHC, AEAC…KPNF, QSLN…NPTY, and AEAY…DPDS. A catalytic region region spans residues 436–931; sequence RNAGQNRLLA…NHNGNHGNLS (496 aa). A compositionally biased stretch (low complexity) spans 864-884; sequence QQQQTQTESVVPEESSVNPSE. The interval 864-931 is disordered; that stretch reads QQQQTQTESV…NHNGNHGNLS (68 aa). Residues 910 to 931 show a composition bias toward polar residues; sequence KSSTSEENGVQSNHNGNHGNLS.

The protein belongs to the glycosyltransferase 41 family. O-GlcNAc transferase subfamily.

It is found in the nucleus. The enzyme catalyses L-seryl-[protein] + UDP-N-acetyl-alpha-D-glucosamine = 3-O-(N-acetyl-beta-D-glucosaminyl)-L-seryl-[protein] + UDP + H(+). The catalysed reaction is L-threonyl-[protein] + UDP-N-acetyl-alpha-D-glucosamine = 3-O-(N-acetyl-beta-D-glucosaminyl)-L-threonyl-[protein] + UDP + H(+). Its pathway is protein modification; protein glycosylation. In terms of biological role, probable O-linked N-acetylglucosamine transferase (OGT) involved in various processes such as gibberellin (GA) signaling pathway. OGTs catalyze the addition of nucleotide-activated sugars directly onto the polypeptide through O-glycosidic linkage with the hydroxyl of serine or threonine. Probably acts by adding O-linked sugars to yet unknown proteins. The sequence is that of Probable UDP-N-acetylglucosamine--peptide N-acetylglucosaminyltransferase SPINDLY (SPY) from Solanum lycopersicum (Tomato).